The primary structure comprises 150 residues: UPF0178 protein PBPRA1738 (150 aa).

This sequence belongs to the UPF0178 family.

This chain is UPF0178 protein PBPRA1738, found in Photobacterium profundum (strain SS9).